The following is a 682-amino-acid chain: Probable potassium transport system protein Kup (682 aa).

Transmembrane regions (helical) follow at residues 13 to 33 (GLLV…LYVM), 55 to 75 (ISLI…LIAL), 98 to 118 (WLVI…TLTP), 138 to 158 (IPVP…LFLF), 171 to 191 (TFGP…IMNL), 217 to 237 (VGVL…ALYS), 250 to 270 (SWPY…VWIL), 295 to 315 (FFAI…LITG), 344 to 364 (LFIP…VFLF), 375 to 395 (GLAI…YLSL), 405 to 425 (VFLL…LAKF), and 428 to 448 (GGYV…IWYF).

This sequence belongs to the HAK/KUP transporter (TC 2.A.72) family.

The protein localises to the cell membrane. The catalysed reaction is K(+)(in) + H(+)(in) = K(+)(out) + H(+)(out). Its function is as follows. Transport of potassium into the cell. Likely operates as a K(+):H(+) symporter. The sequence is that of Probable potassium transport system protein Kup from Lactobacillus gasseri (strain ATCC 33323 / DSM 20243 / BCRC 14619 / CIP 102991 / JCM 1131 / KCTC 3163 / NCIMB 11718 / NCTC 13722 / AM63).